Reading from the N-terminus, the 151-residue chain is uncharacterized protein (151 aa).

4 helical membrane passes run 22 to 42 (IVSI…GFFF), 62 to 82 (ALFI…TKII), 97 to 117 (LFAF…ADYF), and 121 to 141 (IYIP…IELA).

It localises to the cell membrane. This is an uncharacterized protein from Bacillus subtilis (strain 168).